The chain runs to 407 residues: Tryptophan 2,3-dioxygenase B (407 aa).

Residues 71 to 75 (FIVTH) and arginine 143 each bind substrate. A heme-binding site is contributed by histidine 327. Residue threonine 341 coordinates substrate.

It belongs to the tryptophan 2,3-dioxygenase family. As to quaternary structure, homotetramer. Dimer of dimers. Heme serves as cofactor.

The catalysed reaction is L-tryptophan + O2 = N-formyl-L-kynurenine. It functions in the pathway amino-acid degradation; L-tryptophan degradation via kynurenine pathway; L-kynurenine from L-tryptophan: step 1/2. In terms of biological role, heme-dependent dioxygenase that catalyzes the oxidative cleavage of the L-tryptophan (L-Trp) pyrrole ring and converts L-tryptophan to N-formyl-L-kynurenine. Catalyzes the oxidative cleavage of the indole moiety. The sequence is that of Tryptophan 2,3-dioxygenase B from Danio rerio (Zebrafish).